The sequence spans 229 residues: Orotate phosphoribosyltransferase (229 aa).

5-phospho-alpha-D-ribose 1-diphosphate contacts are provided by residues Arg-107, Lys-108, Lys-111, His-113, and 133–141 (EDLTTAGGS). Position 137 (Thr-137) interacts with orotate.

The protein belongs to the purine/pyrimidine phosphoribosyltransferase family. PyrE subfamily. As to quaternary structure, homodimer. The cofactor is Mg(2+).

The catalysed reaction is orotidine 5'-phosphate + diphosphate = orotate + 5-phospho-alpha-D-ribose 1-diphosphate. It functions in the pathway pyrimidine metabolism; UMP biosynthesis via de novo pathway; UMP from orotate: step 1/2. Its function is as follows. Catalyzes the transfer of a ribosyl phosphate group from 5-phosphoribose 1-diphosphate to orotate, leading to the formation of orotidine monophosphate (OMP). This Rhizobium etli (strain CIAT 652) protein is Orotate phosphoribosyltransferase.